The following is a 166-amino-acid chain: Ribosome maturation factor RimM (166 aa).

The region spanning 90–163 (EGQYFIKDII…KIVIKAVEEW (74 aa)) is the PRC barrel domain.

The protein belongs to the RimM family. In terms of assembly, binds ribosomal protein uS19.

It is found in the cytoplasm. Its function is as follows. An accessory protein needed during the final step in the assembly of 30S ribosomal subunit, possibly for assembly of the head region. Essential for efficient processing of 16S rRNA. May be needed both before and after RbfA during the maturation of 16S rRNA. It has affinity for free ribosomal 30S subunits but not for 70S ribosomes. The polypeptide is Ribosome maturation factor RimM (Clostridium acetobutylicum (strain ATCC 824 / DSM 792 / JCM 1419 / IAM 19013 / LMG 5710 / NBRC 13948 / NRRL B-527 / VKM B-1787 / 2291 / W)).